We begin with the raw amino-acid sequence, 220 residues long: 3-dehydroquinate dehydratase (220 aa).

3-dehydroquinate is bound by residues Glu-29–Arg-31 and Arg-56. His-116 serves as the catalytic Proton donor/acceptor. The Schiff-base intermediate with substrate role is filled by Lys-142. Positions 180, 200, and 204 each coordinate 3-dehydroquinate.

Belongs to the type-I 3-dehydroquinase family. In terms of assembly, homodimer.

The catalysed reaction is 3-dehydroquinate = 3-dehydroshikimate + H2O. It participates in metabolic intermediate biosynthesis; chorismate biosynthesis; chorismate from D-erythrose 4-phosphate and phosphoenolpyruvate: step 3/7. Functionally, involved in the third step of the chorismate pathway, which leads to the biosynthesis of aromatic amino acids. Catalyzes the cis-dehydration of 3-dehydroquinate (DHQ) and introduces the first double bond of the aromatic ring to yield 3-dehydroshikimate. In Methanocaldococcus jannaschii (strain ATCC 43067 / DSM 2661 / JAL-1 / JCM 10045 / NBRC 100440) (Methanococcus jannaschii), this protein is 3-dehydroquinate dehydratase.